The chain runs to 266 residues: uncharacterized protein (266 aa).

The next 8 membrane-spanning stretches (helical) occupy residues 9 to 29 (IAAL…LFIF), 37 to 57 (TMPH…LVFY), 69 to 89 (LIKV…ISLL), 123 to 143 (FLLM…MIFT), 153 to 173 (YNPF…LVIA), 184 to 204 (LPLA…LFLL), 216 to 236 (SVFA…ILIL), and 246 to 266 (TNSL…MVFV).

It localises to the cell membrane. This is an uncharacterized protein from Haemophilus influenzae (strain ATCC 51907 / DSM 11121 / KW20 / Rd).